The sequence spans 235 residues: Small ribosomal subunit protein uS2 (235 aa).

Belongs to the universal ribosomal protein uS2 family.

The sequence is that of Small ribosomal subunit protein uS2 from Synechococcus sp. (strain RCC307).